Reading from the N-terminus, the 2192-residue chain is BEACH domain-containing protein lvsE (2192 aa).

Disordered regions lie at residues 948–969, 996–1065, 1160–1303, and 1343–1363; these read STSLSTSSITPPPPNSRNTSTG, TTTT…DEPE, NESQ…NNLS, and DENGVDVSSPNSSSLSSSSSN. The segment covering 996–1049 has biased composition (low complexity); that stretch reads TTTTTTTTTTTTTTSTTSNTGNDSPLSIESPISSPVLIENTTNTTNTTTTNTTN. The segment covering 1171-1187 has biased composition (polar residues); it reads NIDNLNPNTGLPYNKST. The span at 1188–1231 shows a compositional bias: low complexity; sequence NNLSNVNNVNNNNNNNSNNINVSGNNTIGPSSSKSPLRNSRSMS. Positions 1232 to 1243 are enriched in polar residues; that stretch reads IGSSATKSPSRQ. 2 stretches are compositionally biased toward low complexity: residues 1253–1303 and 1350–1363; these read NNNS…NNLS and SSPNSSSLSSSSSN. One can recognise a BEACH-type PH domain in the interval 1366–1491; sequence IEEEKFIGSW…ESIQIFNKIV (126 aa). In terms of domain architecture, BEACH spans 1504-1795; that stretch reads DHPSKIIKKS…QLFSKPHPIR (292 aa). Residues 1823–1849 show a composition bias toward low complexity; sequence GTINSSFSSTSTSTSTSSPPPSTLNSP. The tract at residues 1823–1851 is disordered; that stretch reads GTINSSFSSTSTSTSTSSPPPSTLNSPQG. WD repeat units lie at residues 1973–2012, 2022–2061, and 2156–2192; these read FHHDMVTCISLGSNGKHFATASSDTTILVWNDVDHLIKDS, SHDEPVHCLDINEEWDLIASGSMDKKLILHSLGKGHYQRS, and DSPAAIKTIELVAHEKYMLIGLNDGNLVIIPFDVKDL.

In Dictyostelium discoideum (Social amoeba), this protein is BEACH domain-containing protein lvsE (lvsE).